A 547-amino-acid polypeptide reads, in one-letter code: Chaperonin GroEL (547 aa).

ATP-binding positions include 30–33 (TLGP), 87–91 (DGTTT), G414, 478–480 (DAL), and D494.

This sequence belongs to the chaperonin (HSP60) family. As to quaternary structure, forms a cylinder of 14 subunits composed of two heptameric rings stacked back-to-back. Interacts with the co-chaperonin GroES.

The protein resides in the cytoplasm. The catalysed reaction is ATP + H2O + a folded polypeptide = ADP + phosphate + an unfolded polypeptide.. Together with its co-chaperonin GroES, plays an essential role in assisting protein folding. The GroEL-GroES system forms a nano-cage that allows encapsulation of the non-native substrate proteins and provides a physical environment optimized to promote and accelerate protein folding. The polypeptide is Chaperonin GroEL (Desulforudis audaxviator (strain MP104C)).